Consider the following 313-residue polypeptide: Carbamate kinase 2 (313 aa).

This sequence belongs to the carbamate kinase family.

It is found in the cytoplasm. It catalyses the reaction hydrogencarbonate + NH4(+) + ATP = carbamoyl phosphate + ADP + H2O + H(+). Its pathway is metabolic intermediate metabolism; carbamoyl phosphate degradation; CO(2) and NH(3) from carbamoyl phosphate: step 1/1. The protein is Carbamate kinase 2 (arcC2) of Staphylococcus aureus (strain Mu50 / ATCC 700699).